The following is a 1067-amino-acid chain: Dorsal-ventral patterning protein tolloid (1067 aa).

The signal sequence occupies residues 1 to 36 (MKGMRLMPMKMKAKLVVLSVGALWMMMFFLVDYAEG). Residues 37-136 (RRLSQLPESE…NGQPIQRRRR (100 aa)) constitute a propeptide that is removed on maturation. A Peptidase M12A domain is found at 136–338 (RAVTVRKERT…VQANLLYKCA (203 aa)). N-linked (GlcNAc...) asparagine glycosylation occurs at Asn176. Cystine bridges form between Cys179/Cys337, Cys201/Cys223, Cys203/Cys204, Cys340/Cys390, and Cys417/Cys439. Zn(2+) is bound at residue His231. The active site involves Glu232. Zn(2+)-binding residues include His235 and His241. 2 consecutive short sequence motifs (cell attachment site) follow at residues 245–247 (RGD) and 325–327 (RGD). CUB domains are found at residues 340–477 (CGRT…FEVV) and 478–591 (CGGD…LMLD). Asn441 is a glycosylation site (N-linked (GlcNAc...) asparagine). 6 disulfides stabilise this stretch: Cys478-Cys505, Cys532-Cys554, Cys595-Cys606, Cys602-Cys615, Cys617-Cys630, and Cys634-Cys662. N-linked (GlcNAc...) asparagine glycosylation occurs at Asn543. One can recognise an EGF-like 1; calcium-binding domain in the interval 591–631 (DVDECKFTDHGCQHLCINTLGSYQCGCRAGYELQANGKTCE). The region spanning 634 to 753 (CGGVVDATKS…SGFVAKFVID (120 aa)) is the CUB 3 domain. Asn644 and Asn677 each carry an N-linked (GlcNAc...) asparagine glycan. 8 disulfides stabilise this stretch: Cys693-Cys716, Cys757-Cys768, Cys764-Cys777, Cys779-Cys792, Cys797-Cys823, Cys850-Cys872, Cys910-Cys940, and Cys967-Cys989. Residues 753–793 (DVDECSMNNGGCQHRCRNTFGSYQCSCRNGYTLAENGHNCT) enclose the EGF-like 2; calcium-binding domain. Asn791 is a glycosylation site (N-linked (GlcNAc...) asparagine). CUB domains follow at residues 797–909 (CKFE…FVSE) and 910–1026 (CGGY…FMAV). N-linked (GlcNAc...) asparagine glycans are attached at residues Asn864 and Asn918.

It depends on Zn(2+) as a cofactor.

Metalloprotease which cleaves TGF-beta family ligands daw, Actbeta and myo in vitro. Cleavage of daw enhances its signaling activity. Cleaves dorsal-ventral patterning protein sog. Processes sog more efficiently than metalloprotease tld which also cleaves sog. Required for normal dorsal development. TLD may interact physically with DPP-C protein. This Drosophila melanogaster (Fruit fly) protein is Dorsal-ventral patterning protein tolloid (tld).